We begin with the raw amino-acid sequence, 289 residues long: 3-methyl-2-oxobutanoate hydroxymethyltransferase (289 aa).

The segment covering 1–10 (MSDSKSSAST) has biased composition (low complexity). The disordered stretch occupies residues 1–33 (MSDSKSSASTSEDRLYGSAPSHDVPKRKTRTHH). Mg(2+) contacts are provided by Asp70 and Asp109. 3-methyl-2-oxobutanoate-binding positions include 70 to 71 (DS), Asp109, and Lys139. Position 141 (Glu141) interacts with Mg(2+). Catalysis depends on Glu207, which acts as the Proton acceptor.

Belongs to the PanB family. As to quaternary structure, homodecamer; pentamer of dimers. Requires Mg(2+) as cofactor.

It localises to the cytoplasm. The enzyme catalyses 3-methyl-2-oxobutanoate + (6R)-5,10-methylene-5,6,7,8-tetrahydrofolate + H2O = 2-dehydropantoate + (6S)-5,6,7,8-tetrahydrofolate. Its pathway is cofactor biosynthesis; (R)-pantothenate biosynthesis; (R)-pantoate from 3-methyl-2-oxobutanoate: step 1/2. In terms of biological role, catalyzes the reversible reaction in which hydroxymethyl group from 5,10-methylenetetrahydrofolate is transferred onto alpha-ketoisovalerate to form ketopantoate. This chain is 3-methyl-2-oxobutanoate hydroxymethyltransferase, found in Rhodococcus jostii (strain RHA1).